The primary structure comprises 374 residues: Glyceraldehyde-3-phosphate dehydrogenase A, chloroplastic (374 aa).

The transit peptide at 1 to 34 (MAAMMQKSAFTGSAVSSKSGVRAKAARAVVDVRA) directs the protein to the chloroplast. Residues 47-48 (RI), Asp-71, and Arg-116 each bind NADP(+). A disulfide bond links Cys-55 and Cys-325. Residues 189–191 (SCT), Thr-220, Arg-235, 248–249 (TG), and Arg-271 contribute to the D-glyceraldehyde 3-phosphate site. The active-site Nucleophile is the Cys-190. Asn-353 provides a ligand contact to NADP(+).

Belongs to the glyceraldehyde-3-phosphate dehydrogenase family. Homotetramer. Component of a complex that contains two dimers of PRK, two tetramers of GAPDH and CP12. CP12 associates with GAPDH, causing its conformation to change. This GAPDH/CP12 complex binds PRK to form a half-complex (one unit). This unit probably dimerizes due partially to interactions between the enzymes of each unit.

The protein localises to the plastid. It localises to the chloroplast. The enzyme catalyses D-glyceraldehyde 3-phosphate + phosphate + NADP(+) = (2R)-3-phospho-glyceroyl phosphate + NADPH + H(+). It functions in the pathway carbohydrate biosynthesis; Calvin cycle. The polypeptide is Glyceraldehyde-3-phosphate dehydrogenase A, chloroplastic (GAPA) (Chlamydomonas reinhardtii (Chlamydomonas smithii)).